Reading from the N-terminus, the 280-residue chain is Energy-coupling factor transporter ATP-binding protein EcfA2 (280 aa).

Residues 3-245 (INLQNVSYTY…VSLLEKKQLG (243 aa)) form the ABC transporter domain. 40–47 (GHTGSGKS) is a binding site for ATP.

The protein belongs to the ABC transporter superfamily. Energy-coupling factor EcfA family. As to quaternary structure, forms a stable energy-coupling factor (ECF) transporter complex composed of 2 membrane-embedded substrate-binding proteins (S component), 2 ATP-binding proteins (A component) and 2 transmembrane proteins (T component).

The protein localises to the cell membrane. Its function is as follows. ATP-binding (A) component of a common energy-coupling factor (ECF) ABC-transporter complex. Unlike classic ABC transporters this ECF transporter provides the energy necessary to transport a number of different substrates. The sequence is that of Energy-coupling factor transporter ATP-binding protein EcfA2 from Streptococcus pyogenes serotype M28 (strain MGAS6180).